Here is a 62-residue protein sequence, read N- to C-terminus: Prokaryotic ubiquitin-like protein Pup (62 aa).

Positions 1–29 (MSQQSLNAPGPGAEDGNDPEAVTGGQTFA) are disordered. Residues 21-56 (AVTGGQTFASAQAADDLLDEIDSVLESNAETFVRSF) are ARC ATPase binding. Gln62 carries the post-translational modification Deamidated glutamine. An Isoglutamyl lysine isopeptide (Gln-Lys) (interchain with K-? in acceptor proteins) cross-link involves residue Gln62.

The protein belongs to the prokaryotic ubiquitin-like protein family. As to quaternary structure, strongly interacts with the proteasome-associated ATPase ARC through a hydrophobic interface; the interacting region of Pup lies in its C-terminal half. There is one Pup binding site per ARC hexamer ring. Post-translationally, is modified by deamidation of its C-terminal glutamine to glutamate by the deamidase Dop, a prerequisite to the subsequent pupylation process.

It functions in the pathway protein degradation; proteasomal Pup-dependent pathway. Functionally, protein modifier that is covalently attached to lysine residues of substrate proteins, thereby targeting them for proteasomal degradation. The tagging system is termed pupylation. This is Prokaryotic ubiquitin-like protein Pup from Brachybacterium faecium (strain ATCC 43885 / DSM 4810 / JCM 11609 / LMG 19847 / NBRC 14762 / NCIMB 9860 / 6-10).